The chain runs to 258 residues: Deoxyribose-phosphate aldolase (258 aa).

Residue aspartate 101 is the Proton donor/acceptor of the active site. The Schiff-base intermediate with acetaldehyde role is filled by lysine 166. Lysine 200 functions as the Proton donor/acceptor in the catalytic mechanism.

Belongs to the DeoC/FbaB aldolase family. DeoC type 2 subfamily.

The protein resides in the cytoplasm. The catalysed reaction is 2-deoxy-D-ribose 5-phosphate = D-glyceraldehyde 3-phosphate + acetaldehyde. It participates in carbohydrate degradation; 2-deoxy-D-ribose 1-phosphate degradation; D-glyceraldehyde 3-phosphate and acetaldehyde from 2-deoxy-alpha-D-ribose 1-phosphate: step 2/2. Its function is as follows. Catalyzes a reversible aldol reaction between acetaldehyde and D-glyceraldehyde 3-phosphate to generate 2-deoxy-D-ribose 5-phosphate. This is Deoxyribose-phosphate aldolase from Actinobacillus pleuropneumoniae serotype 3 (strain JL03).